We begin with the raw amino-acid sequence, 170 residues long: Adenine phosphoribosyltransferase (170 aa).

It belongs to the purine/pyrimidine phosphoribosyltransferase family. In terms of assembly, homodimer.

It is found in the cytoplasm. It catalyses the reaction AMP + diphosphate = 5-phospho-alpha-D-ribose 1-diphosphate + adenine. The protein operates within purine metabolism; AMP biosynthesis via salvage pathway; AMP from adenine: step 1/1. Its function is as follows. Catalyzes a salvage reaction resulting in the formation of AMP, that is energically less costly than de novo synthesis. This Thermotoga sp. (strain RQ2) protein is Adenine phosphoribosyltransferase.